A 154-amino-acid chain; its full sequence is Large ribosomal subunit protein uL30 (154 aa).

This sequence belongs to the universal ribosomal protein uL30 family. Part of the 50S ribosomal subunit.

In Methanococcus vannielii, this protein is Large ribosomal subunit protein uL30.